A 128-amino-acid polypeptide reads, in one-letter code: Fluoride-specific ion channel FluC (128 aa).

Transmembrane regions (helical) follow at residues 2–22, 37–57, 65–85, and 101–121; these read LTFA…GAWL, WGTL…VALI, AWIR…FSTF, and AAAY…LGLA. Positions 77 and 80 each coordinate Na(+).

It belongs to the fluoride channel Fluc/FEX (TC 1.A.43) family.

It localises to the cell inner membrane. The catalysed reaction is fluoride(in) = fluoride(out). Na(+) is not transported, but it plays an essential structural role and its presence is essential for fluoride channel function. Its function is as follows. Fluoride-specific ion channel. Important for reducing fluoride concentration in the cell, thus reducing its toxicity. The polypeptide is Fluoride-specific ion channel FluC (Bordetella bronchiseptica (strain ATCC BAA-588 / NCTC 13252 / RB50) (Alcaligenes bronchisepticus)).